The primary structure comprises 378 residues: UPF0754 membrane protein BcerKBAB4_0766 (378 aa).

A run of 2 helical transmembrane segments spans residues 1 to 21 (MNIW…GGYT) and 357 to 377 (YLGA…LLFL).

It belongs to the UPF0754 family.

The protein localises to the cell membrane. The protein is UPF0754 membrane protein BcerKBAB4_0766 of Bacillus mycoides (strain KBAB4) (Bacillus weihenstephanensis).